The following is a 99-amino-acid chain: Aspartyl/glutamyl-tRNA(Asn/Gln) amidotransferase subunit C (99 aa).

It belongs to the GatC family. In terms of assembly, heterotrimer of A, B and C subunits.

The catalysed reaction is L-glutamyl-tRNA(Gln) + L-glutamine + ATP + H2O = L-glutaminyl-tRNA(Gln) + L-glutamate + ADP + phosphate + H(+). The enzyme catalyses L-aspartyl-tRNA(Asn) + L-glutamine + ATP + H2O = L-asparaginyl-tRNA(Asn) + L-glutamate + ADP + phosphate + 2 H(+). Its function is as follows. Allows the formation of correctly charged Asn-tRNA(Asn) or Gln-tRNA(Gln) through the transamidation of misacylated Asp-tRNA(Asn) or Glu-tRNA(Gln) in organisms which lack either or both of asparaginyl-tRNA or glutaminyl-tRNA synthetases. The reaction takes place in the presence of glutamine and ATP through an activated phospho-Asp-tRNA(Asn) or phospho-Glu-tRNA(Gln). This is Aspartyl/glutamyl-tRNA(Asn/Gln) amidotransferase subunit C from Solibacter usitatus (strain Ellin6076).